The primary structure comprises 98 residues: snRNA-activating protein complex subunit 5 (98 aa).

The span at 73-82 (QTTLELSTKS) shows a compositional bias: polar residues. Positions 73-98 (QTTLELSTKSHVTEEEEEEEEEESDS) are disordered. At Thr-85 the chain carries Phosphothreonine. The span at 86 to 98 (EEEEEEEEEESDS) shows a compositional bias: acidic residues.

In terms of assembly, part of the SNAPc complex composed of 5 subunits: SNAPC1, SNAPC2, SNAPC3, SNAPC4 and SNAPC5. SNAPC5 interacts with SNAPC4.

Its subcellular location is the nucleus. Its function is as follows. Part of the SNAPc complex required for the transcription of both RNA polymerase II and III small-nuclear RNA genes. Binds to the proximal sequence element (PSE), a non-TATA-box basal promoter element common to these 2 types of genes. Recruits TBP and BRF2 to the U6 snRNA TATA box. The chain is snRNA-activating protein complex subunit 5 (SNAPC5) from Homo sapiens (Human).